Consider the following 323-residue polypeptide: tRNA dimethylallyltransferase (323 aa).

21–28 (GPTACNKS) contacts ATP. 23 to 28 (TACNKS) serves as a coordination point for substrate. 3 interaction with substrate tRNA regions span residues 46–49 (DSAL), 171–175 (QRVLR), and 252–257 (RCVGYR).

It belongs to the IPP transferase family. Monomer. It depends on Mg(2+) as a cofactor.

It catalyses the reaction adenosine(37) in tRNA + dimethylallyl diphosphate = N(6)-dimethylallyladenosine(37) in tRNA + diphosphate. Catalyzes the transfer of a dimethylallyl group onto the adenine at position 37 in tRNAs that read codons beginning with uridine, leading to the formation of N6-(dimethylallyl)adenosine (i(6)A). This is tRNA dimethylallyltransferase from Buchnera aphidicola subsp. Baizongia pistaciae (strain Bp).